Here is a 284-residue protein sequence, read N- to C-terminus: ADP-polyphosphate phosphotransferase 3 (284 aa).

Composition is skewed to basic and acidic residues over residues 1–22 (MDKH…RKSA) and 260–277 (DLGK…DTRR). Disordered stretches follow at residues 1–32 (MDKH…TRSG) and 260–284 (DLGK…PNLF).

The protein belongs to the polyphosphate kinase 2 (PPK2) family. Class I subfamily.

It carries out the reaction [phosphate](n) + ATP = [phosphate](n+1) + ADP. It catalyses the reaction [phosphate](n) + GTP = [phosphate](n+1) + GDP. In terms of biological role, uses inorganic polyphosphate (polyP) as a donor to convert ADP to ATP. Can also convert GDP to GTP, with lower efficiency. The polypeptide is ADP-polyphosphate phosphotransferase 3 (Rhizobium meliloti (strain 1021) (Ensifer meliloti)).